A 1154-amino-acid polypeptide reads, in one-letter code: Caspase recruitment domain-containing protein 11 (1154 aa).

Residues 18-110 (EEDALWENVE…ELYKLVTGKE (93 aa)) enclose the CARD domain. The linker stretch occupies residues 111 to 128 (PTRRFSTIVVEEGHEGLT). The stretch at 130-449 (FLMNEVIKLQ…KDSNNLDQSL (320 aa)) forms a coiled coil. A phosphoserine mark is found at Ser-448 and Ser-466. The inhibitory domain (ID) stretch occupies residues 450–666 (PRNLPVTIIS…GHVRGPGPSV (217 aa)). Residues 460–626 (QDFGDASPRT…HSSSSSHQSE (167 aa)) form a disordered region. Residues 473–484 (EADDSSTSEESP) are compositionally biased toward acidic residues. Phosphoserine is present on Ser-512. Residues 518-529 (RTSDFQAKGHEE) show a composition bias toward basic and acidic residues. The segment covering 534–562 (ASPSSCGSLPITNSFTKMQPPRSRSSIMS) has biased composition (polar residues). Phosphoserine is present on Ser-535. Residue Ser-559 is modified to Phosphoserine; by PKC/PRKCB and PKC/PRKCQ. The segment covering 573 to 587 (IVRRYKEDAPHRSTV) has biased composition (basic and acidic residues). The residue at position 593 (Ser-593) is a Phosphoserine. The segment covering 614 to 625 (SSIHSSSSSHQS) has biased composition (low complexity). 2 positions are modified to phosphoserine; by PKC/PRKCB and PKC/PRKCQ: Ser-644 and Ser-652. Residues 667 to 755 (QHTTLNGDSL…PVTLHYKVNH (89 aa)) form the PDZ domain. Residues Ser-886 and Ser-925 each carry the phosphoserine modification. One can recognise a Guanylate kinase-like domain in the interval 973–1140 (RRRPVLFTPT…LLRVVKDKIG (168 aa)).

In terms of assembly, homodimer; disulfide-linked. Homomultimer; polymerizes following activation, forming a nucleating helical template that seeds BCL10-filament formation via a CARD-CARD interaction. Interacts (via CARD domain) with BCL10 (via CARD domain); interaction takes place following CARD11 activation and polymerization, leading to the formation of a filamentous CBM complex assembly. Component of a CBM complex (CARD11-BCL10-MALT1) complex involved in NF-kappa-B activation. Found in a membrane raft complex, at least composed of BCL10, CARD11, DPP4 and IKBKB. Interacts (via PDZ domain) with DPP4 (via cytoplasmic tail). In terms of processing, phosphorylation at Ser-559, Ser-644 and Ser-652 by PRKCB and PRKCQ leads to a shift from an inactive to an active form that activates the NF-kappa-B signaling. Detected in adult peripheral blood leukocytes, thymus, spleen and liver. Also found in promyelocytic leukemia HL-60 cells, chronic myelogenous leukemia K-562 cells, Burkitt's lymphoma Raji cells and colorectal adenocarcinoma SW480 cells. Not detected in HeLaS3, MOLT-4, A-549 and G431 cells.

Its subcellular location is the cytoplasm. It is found in the membrane raft. Maintained in an autoinhibited state via homodimerization in which the CARD domain forms an extensive interaction with the adjacent linker and coiled-coil regions. Activation downstream of T-cell receptor (TCR) by phosphorylation by PRKCB and PRKCQ triggers CARD11 homooligomerization and BCL10 recruitment, followed by activation of NF-kappa-B. Its function is as follows. Adapter protein that plays a key role in adaptive immune response by transducing the activation of NF-kappa-B downstream of T-cell receptor (TCR) and B-cell receptor (BCR) engagement. Transduces signals downstream TCR or BCR activation via the formation of a multiprotein complex together with BCL10 and MALT1 that induces NF-kappa-B and MAP kinase p38 (MAPK11, MAPK12, MAPK13 and/or MAPK14) pathways. Upon activation in response to TCR or BCR triggering, CARD11 homooligomerizes to form a nucleating helical template that recruits BCL10 via CARD-CARD interaction, thereby promoting polymerization of BCL10 and subsequent recruitment of MALT1: this leads to I-kappa-B kinase (IKK) phosphorylation and degradation, and release of NF-kappa-B proteins for nuclear translocation. Its binding to DPP4 induces T-cell proliferation and NF-kappa-B activation in a T-cell receptor/CD3-dependent manner. Promotes linear ubiquitination of BCL10 by promoting the targeting of BCL10 to RNF31/HOIP. Stimulates the phosphorylation of BCL10. Also activates the TORC1 signaling pathway. This is Caspase recruitment domain-containing protein 11 from Homo sapiens (Human).